Here is a 154-residue protein sequence, read N- to C-terminus: Small ribosomal subunit protein bS18 (154 aa).

Residues 1-82 (MEKKTTKKAT…PFAKYNRGYP (82 aa)) are disordered. A compositionally biased stretch (low complexity) spans 8 to 19 (KATASKTTTTKK). A compositionally biased stretch (basic and acidic residues) spans 20–32 (AAAEKTEIKETKK). Positions 33-49 (TTTTKTSTAKKATTASV) are enriched in low complexity. The span at 50–69 (EKTEVKETKKSSDNKKEFNP) shows a compositional bias: basic and acidic residues.

The protein belongs to the bacterial ribosomal protein bS18 family. As to quaternary structure, part of the 30S ribosomal subunit. Forms a tight heterodimer with protein bS6.

Binds as a heterodimer with protein bS6 to the central domain of the 16S rRNA, where it helps stabilize the platform of the 30S subunit. The protein is Small ribosomal subunit protein bS18 of Malacoplasma penetrans (strain HF-2) (Mycoplasma penetrans).